We begin with the raw amino-acid sequence, 230 residues long: Nicotinamide riboside kinase 2 (230 aa).

Gly9–Thr17 is an ATP binding site. The Mg(2+) site is built by Thr16 and Asp35. Asp35 serves as the catalytic Proton acceptor. Substrate is bound by residues Asp35–Phe38 and Trp54–Asp55. Arg130 contacts ATP. Residues Arg131 and Tyr136–Thr137 contribute to the substrate site. ATP-binding positions include Arg134–Tyr136 and Lys174–Arg176. A disordered region spans residues Leu191–Met230.

It belongs to the uridine kinase family. NRK subfamily. As to quaternary structure, monomer. Interacts with ITGB1 alone or when associated with alpha-7, but not with alpha-5. Predominantly expressed in skeletal muscle and, at a much lower level, in the heart (at protein level). No expression in brain, kidney, liver, lung, pancreas nor placenta.

The enzyme catalyses beta-nicotinamide D-riboside + ATP = beta-nicotinamide D-ribonucleotide + ADP + H(+). It catalyses the reaction beta-D-ribosylnicotinate + ATP = nicotinate beta-D-ribonucleotide + ADP + H(+). Its pathway is cofactor biosynthesis; NAD(+) biosynthesis. Its function is as follows. Catalyzes the phosphorylation of nicotinamide riboside (NR) and nicotinic acid riboside (NaR) to form nicotinamide mononucleotide (NMN) and nicotinic acid mononucleotide (NaMN). Reduces laminin matrix deposition and cell adhesion to laminin, but not to fibronectin. Involved in the regulation of PXN at the protein level and of PXN tyrosine phosphorylation. May play a role in the regulation of terminal myogenesis. The protein is Nicotinamide riboside kinase 2 (NMRK2) of Homo sapiens (Human).